Consider the following 455-residue polypeptide: Bleomycin hydrolase (455 aa).

M1 is modified (N-acetylmethionine). Catalysis depends on residues C73 and H372. An N6-acetyllysine modification is found at K391. Residue N396 is part of the active site.

This sequence belongs to the peptidase C1 family. Homohexamer. Interacts with NUDT12 (via ANK repeats).

It localises to the cytoplasm. It is found in the cytoplasmic granule. It catalyses the reaction Inactivates bleomycin B2 (a cytotoxic glycometallopeptide) by hydrolysis of a carboxyamide bond of beta-aminoalanine, but also shows general aminopeptidase activity. The specificity varies somewhat with source, but amino acid arylamides of Met, Leu and Ala are preferred.. Its function is as follows. The normal physiological role of BLM hydrolase is unknown, but it catalyzes the inactivation of the antitumor drug BLM (a glycopeptide) by hydrolyzing the carboxamide bond of its B-aminoalaninamide moiety thus protecting normal and malignant cells from BLM toxicity. In Mus musculus (Mouse), this protein is Bleomycin hydrolase (Blmh).